We begin with the raw amino-acid sequence, 253 residues long: Triosephosphate isomerase (253 aa).

Asparagine 9–lysine 11 is a substrate binding site. The Electrophile role is filled by histidine 97. Glutamate 169 functions as the Proton acceptor in the catalytic mechanism. Residues glycine 175, serine 215, and glycine 236–glycine 237 contribute to the substrate site.

Belongs to the triosephosphate isomerase family. In terms of assembly, homodimer.

The protein localises to the cytoplasm. It carries out the reaction D-glyceraldehyde 3-phosphate = dihydroxyacetone phosphate. The protein operates within carbohydrate biosynthesis; gluconeogenesis. Its pathway is carbohydrate degradation; glycolysis; D-glyceraldehyde 3-phosphate from glycerone phosphate: step 1/1. Involved in the gluconeogenesis. Catalyzes stereospecifically the conversion of dihydroxyacetone phosphate (DHAP) to D-glyceraldehyde-3-phosphate (G3P). In Staphylococcus aureus (strain Mu50 / ATCC 700699), this protein is Triosephosphate isomerase.